Reading from the N-terminus, the 357-residue chain is Glutamine synthetase cytosolic isozyme (357 aa).

One can recognise a GS beta-grasp domain in the interval 20-100 (VIAEYIWIGG…VICDAYSPNG (81 aa)). The GS catalytic domain occupies 107 to 357 (KRAAAAKIFN…IAETTILWKP (251 aa)).

The protein belongs to the glutamine synthetase family. Homooctamer.

The protein resides in the cytoplasm. It catalyses the reaction L-glutamate + NH4(+) + ATP = L-glutamine + ADP + phosphate + H(+). The protein is Glutamine synthetase cytosolic isozyme of Pinus sylvestris (Scotch pine).